The chain runs to 285 residues: HTH-type transcriptional regulator MurR (285 aa).

The HTH rpiR-type domain maps to 1 to 77 (MLYLTKISNA…MALIGEYSAS (77 aa)). The H-T-H motif DNA-binding region spans 37-56 (SRQMAKQLGISQSSIVKFAQ). Positions 128–279 (IIEVISKAPF…SLKMIQRSSE (152 aa)) constitute an SIS domain.

Homotetramer.

Its pathway is amino-sugar metabolism; N-acetylmuramate degradation [regulation]. In terms of biological role, represses the expression of the murPQ operon involved in the uptake and degradation of N-acetylmuramic acid (MurNAc). Binds to two adjacent inverted repeats within the operator region. MurNAc 6-phosphate, the substrate of MurQ, is the specific inducer that weakens binding of MurR to the operator. The polypeptide is HTH-type transcriptional regulator MurR (Shigella boydii serotype 18 (strain CDC 3083-94 / BS512)).